Consider the following 251-residue polypeptide: uncharacterized protein (251 aa).

The 116-residue stretch at 3 to 118 (KVIICDDERI…QLEHILDILV (116 aa)) folds into the Response regulatory domain. Aspartate 55 is modified (4-aspartylphosphate). Positions 152 to 249 (NQILSQIKQH…HMSPSDYNKQ (98 aa)) constitute an HTH araC/xylS-type domain. DNA-binding regions (H-T-H motif) lie at residues 169–190 (LDLI…KEHV) and 216–239 (HYEI…KKYL).

Post-translationally, phosphorylated by SERP2405.

It localises to the cytoplasm. In terms of biological role, probable member of the two-component regulatory system SERP2405/SERP2406. This is an uncharacterized protein from Staphylococcus epidermidis (strain ATCC 35984 / DSM 28319 / BCRC 17069 / CCUG 31568 / BM 3577 / RP62A).